Consider the following 225-residue polypeptide: Class E basic helix-loop-helix protein 23 (225 aa).

The disordered stretch occupies residues 35–104 (EAARGYGTPG…PREQRSLRLS (70 aa)). One can recognise a bHLH domain in the interval 100–154 (SLRLSINARERRRMHDLNDALDGLRAVIPYAHSPSVRKLSKIATLLLAKNYILMQ).

It is found in the nucleus. May function as transcriptional repressor. May modulate the expression of genes required for the differentiation and/or maintenance of pancreatic and neuronal cell types. May be important for rod bipolar cell maturation. The sequence is that of Class E basic helix-loop-helix protein 23 (BHLHE23) from Homo sapiens (Human).